Consider the following 404-residue polypeptide: Chorismate synthase (404 aa).

Residues arginine 43 and arginine 49 each coordinate NADP(+). Residues 138–140, 259–260, glycine 303, 318–322, and arginine 344 contribute to the FMN site; these read RAS, QA, and KPIST.

The protein belongs to the chorismate synthase family. As to quaternary structure, homotetramer. The cofactor is FMNH2.

It catalyses the reaction 5-O-(1-carboxyvinyl)-3-phosphoshikimate = chorismate + phosphate. The protein operates within metabolic intermediate biosynthesis; chorismate biosynthesis; chorismate from D-erythrose 4-phosphate and phosphoenolpyruvate: step 7/7. Functionally, catalyzes the anti-1,4-elimination of the C-3 phosphate and the C-6 proR hydrogen from 5-enolpyruvylshikimate-3-phosphate (EPSP) to yield chorismate, which is the branch point compound that serves as the starting substrate for the three terminal pathways of aromatic amino acid biosynthesis. This reaction introduces a second double bond into the aromatic ring system. The sequence is that of Chorismate synthase from Mycolicibacterium paratuberculosis (strain ATCC BAA-968 / K-10) (Mycobacterium paratuberculosis).